Reading from the N-terminus, the 239-residue chain is Ribonuclease HII (239 aa).

Positions 18-231 constitute an RNase H type-2 domain; the sequence is KIIVGLDEAG…SKNLLKEIEE (214 aa). Residues Asp24, Glu25, and Asp125 each contribute to the a divalent metal cation site.

The protein belongs to the RNase HII family. Requires Mn(2+) as cofactor. Mg(2+) is required as a cofactor.

The protein resides in the cytoplasm. It catalyses the reaction Endonucleolytic cleavage to 5'-phosphomonoester.. Functionally, endonuclease that specifically degrades the RNA of RNA-DNA hybrids. This Methanococcus maripaludis (strain C5 / ATCC BAA-1333) protein is Ribonuclease HII.